The primary structure comprises 901 residues: Putative serine/threonine-protein kinase YPL150W (901 aa).

The Protein kinase domain occupies 41–287 (YKILKQIGEG…LSQVLRHPFL (247 aa)). ATP contacts are provided by residues 47-55 (IGEGSFGKV) and Lys-70. The Proton acceptor role is filled by Asp-157. Ser-456 is modified (phosphoserine). Positions 500–530 (APSSGSFLKKNSGSIQKSRTDTVANPSRTES) are disordered. Position 533 is a phosphoserine (Ser-533). Residues 588–599 (SSISSEISQTST) are compositionally biased toward low complexity. Disordered stretches follow at residues 588 to 629 (SSIS…NRPL) and 745 to 770 (TQRP…SSKR). Polar residues predominate over residues 600-613 (GNYDSESAENSRSI). The segment covering 759–770 (RHGKNARRSSKR) has biased composition (basic residues).

The protein belongs to the protein kinase superfamily. Ser/Thr protein kinase family.

The enzyme catalyses L-seryl-[protein] + ATP = O-phospho-L-seryl-[protein] + ADP + H(+). It catalyses the reaction L-threonyl-[protein] + ATP = O-phospho-L-threonyl-[protein] + ADP + H(+). Its function is as follows. Putative serine/threonine-protein kinase. The sequence is that of Putative serine/threonine-protein kinase YPL150W from Saccharomyces cerevisiae (strain ATCC 204508 / S288c) (Baker's yeast).